The following is a 58-amino-acid chain: Photosystem II reaction center protein K (58 aa).

Residues 1 to 21 (MFNAYLDTVLDLSANGTVILA) constitute a propeptide that is removed on maturation. The helical transmembrane segment at 29–49 (IFDPIVDVMPIIPVFFLLLAF) threads the bilayer.

It belongs to the PsbK family. As to quaternary structure, PSII is composed of 1 copy each of membrane proteins PsbA, PsbB, PsbC, PsbD, PsbE, PsbF, PsbH, PsbI, PsbJ, PsbK, PsbL, PsbM, PsbT, PsbX, PsbY, PsbZ, Psb30/Ycf12, at least 3 peripheral proteins of the oxygen-evolving complex and a large number of cofactors. It forms dimeric complexes.

It localises to the plastid. The protein localises to the chloroplast thylakoid membrane. Its function is as follows. One of the components of the core complex of photosystem II (PSII). PSII is a light-driven water:plastoquinone oxidoreductase that uses light energy to abstract electrons from H(2)O, generating O(2) and a proton gradient subsequently used for ATP formation. It consists of a core antenna complex that captures photons, and an electron transfer chain that converts photonic excitation into a charge separation. The polypeptide is Photosystem II reaction center protein K (Staurastrum punctulatum (Green alga)).